Reading from the N-terminus, the 523-residue chain is GMP synthase [glutamine-hydrolyzing] (523 aa).

A Glutamine amidotransferase type-1 domain is found at 8–205 (KILILDFGSQ…VVNICGCETK (198 aa)). Cys85 (nucleophile) is an active-site residue. Active-site residues include His179 and Glu181. Positions 206–398 (WTAENIIEDA…LGLPAEMINR (193 aa)) constitute a GMPS ATP-PPase domain. An ATP-binding site is contributed by 233-239 (SGGVDSS).

In terms of assembly, homodimer.

The catalysed reaction is XMP + L-glutamine + ATP + H2O = GMP + L-glutamate + AMP + diphosphate + 2 H(+). It participates in purine metabolism; GMP biosynthesis; GMP from XMP (L-Gln route): step 1/1. In terms of biological role, catalyzes the synthesis of GMP from XMP. This Haemophilus influenzae (strain ATCC 51907 / DSM 11121 / KW20 / Rd) protein is GMP synthase [glutamine-hydrolyzing] (guaA).